The chain runs to 874 residues: Alanine--tRNA ligase (874 aa).

The Zn(2+) site is built by H562, H566, C665, and H669.

This sequence belongs to the class-II aminoacyl-tRNA synthetase family. The cofactor is Zn(2+).

It is found in the cytoplasm. The catalysed reaction is tRNA(Ala) + L-alanine + ATP = L-alanyl-tRNA(Ala) + AMP + diphosphate. In terms of biological role, catalyzes the attachment of alanine to tRNA(Ala) in a two-step reaction: alanine is first activated by ATP to form Ala-AMP and then transferred to the acceptor end of tRNA(Ala). Also edits incorrectly charged Ser-tRNA(Ala) and Gly-tRNA(Ala) via its editing domain. The sequence is that of Alanine--tRNA ligase from Pseudomonas fluorescens (strain ATCC BAA-477 / NRRL B-23932 / Pf-5).